Reading from the N-terminus, the 239-residue chain is Protein GrpE (239 aa).

Disordered regions lie at residues 1–50 (MIEN…INTE) and 209–239 (MGHGQQNSQEEVEKDTVEEDIDSEENTSEDV). Polar residues predominate over residues 16–30 (VLNQDNAPEDNSSAA). The span at 218–239 (EEVEKDTVEEDIDSEENTSEDV) shows a compositional bias: acidic residues.

The protein belongs to the GrpE family. As to quaternary structure, homodimer.

It is found in the cytoplasm. Participates actively in the response to hyperosmotic and heat shock by preventing the aggregation of stress-denatured proteins, in association with DnaK and GrpE. It is the nucleotide exchange factor for DnaK and may function as a thermosensor. Unfolded proteins bind initially to DnaJ; upon interaction with the DnaJ-bound protein, DnaK hydrolyzes its bound ATP, resulting in the formation of a stable complex. GrpE releases ADP from DnaK; ATP binding to DnaK triggers the release of the substrate protein, thus completing the reaction cycle. Several rounds of ATP-dependent interactions between DnaJ, DnaK and GrpE are required for fully efficient folding. The chain is Protein GrpE from Prochlorococcus marinus (strain MIT 9312).